Reading from the N-terminus, the 134-residue chain is Large ribosomal subunit protein bL17 (134 aa).

The protein belongs to the bacterial ribosomal protein bL17 family. Part of the 50S ribosomal subunit. Contacts protein L32.

The polypeptide is Large ribosomal subunit protein bL17 (Colwellia psychrerythraea (strain 34H / ATCC BAA-681) (Vibrio psychroerythus)).